The sequence spans 506 residues: Maturase K (506 aa).

The protein belongs to the intron maturase 2 family. MatK subfamily.

The protein localises to the plastid. It localises to the chloroplast. In terms of biological role, usually encoded in the trnK tRNA gene intron. Probably assists in splicing its own and other chloroplast group II introns. In Melilotus albus (White sweet clover), this protein is Maturase K.